Consider the following 714-residue polypeptide: Polyribonucleotide nucleotidyltransferase (714 aa).

2 residues coordinate Mg(2+): aspartate 486 and aspartate 492. In terms of domain architecture, KH spans 553–612 (PRIITMKINPEKIRDVIGKGGAVIRALTEETGTTIDIEEDGTIKIGCTSAEAGEEAKKRI). Residues 622 to 690 (GQVYDGTVLK…DKGRVRLSAK (69 aa)) form the S1 motif domain.

This sequence belongs to the polyribonucleotide nucleotidyltransferase family. It depends on Mg(2+) as a cofactor.

The protein resides in the cytoplasm. The enzyme catalyses RNA(n+1) + phosphate = RNA(n) + a ribonucleoside 5'-diphosphate. Involved in mRNA degradation. Catalyzes the phosphorolysis of single-stranded polyribonucleotides processively in the 3'- to 5'-direction. This chain is Polyribonucleotide nucleotidyltransferase, found in Methylobacillus flagellatus (strain ATCC 51484 / DSM 6875 / VKM B-1610 / KT).